The primary structure comprises 249 residues: 23S rRNA (guanosine-2'-O-)-methyltransferase RlmB (249 aa).

Residues Gly-200, Ile-220, and Leu-229 each coordinate S-adenosyl-L-methionine.

It belongs to the class IV-like SAM-binding methyltransferase superfamily. RNA methyltransferase TrmH family. RlmB subfamily.

It is found in the cytoplasm. The enzyme catalyses guanosine(2251) in 23S rRNA + S-adenosyl-L-methionine = 2'-O-methylguanosine(2251) in 23S rRNA + S-adenosyl-L-homocysteine + H(+). In terms of biological role, specifically methylates the ribose of guanosine 2251 in 23S rRNA. This chain is 23S rRNA (guanosine-2'-O-)-methyltransferase RlmB, found in Xylella fastidiosa (strain 9a5c).